A 181-amino-acid polypeptide reads, in one-letter code: Crossover junction endodeoxyribonuclease RuvC (181 aa).

Active-site residues include aspartate 7, glutamate 67, and aspartate 139. Mg(2+) contacts are provided by aspartate 7, glutamate 67, and aspartate 139.

The protein belongs to the RuvC family. Homodimer which binds Holliday junction (HJ) DNA. The HJ becomes 2-fold symmetrical on binding to RuvC with unstacked arms; it has a different conformation from HJ DNA in complex with RuvA. In the full resolvosome a probable DNA-RuvA(4)-RuvB(12)-RuvC(2) complex forms which resolves the HJ. Mg(2+) serves as cofactor.

It is found in the cytoplasm. It carries out the reaction Endonucleolytic cleavage at a junction such as a reciprocal single-stranded crossover between two homologous DNA duplexes (Holliday junction).. Its function is as follows. The RuvA-RuvB-RuvC complex processes Holliday junction (HJ) DNA during genetic recombination and DNA repair. Endonuclease that resolves HJ intermediates. Cleaves cruciform DNA by making single-stranded nicks across the HJ at symmetrical positions within the homologous arms, yielding a 5'-phosphate and a 3'-hydroxyl group; requires a central core of homology in the junction. The consensus cleavage sequence is 5'-(A/T)TT(C/G)-3'. Cleavage occurs on the 3'-side of the TT dinucleotide at the point of strand exchange. HJ branch migration catalyzed by RuvA-RuvB allows RuvC to scan DNA until it finds its consensus sequence, where it cleaves and resolves the cruciform DNA. The protein is Crossover junction endodeoxyribonuclease RuvC of Cupriavidus metallidurans (strain ATCC 43123 / DSM 2839 / NBRC 102507 / CH34) (Ralstonia metallidurans).